The primary structure comprises 718 residues: DNA ligase (718 aa).

NAD(+) is bound by residues 34–38, 83–84, and glutamate 115; these read DAEYD and SL. Lysine 117 acts as the N6-AMP-lysine intermediate in catalysis. Residues arginine 138, glutamate 186, lysine 302, and lysine 326 each contribute to the NAD(+) site. The Zn(2+) site is built by cysteine 420, cysteine 423, cysteine 438, and cysteine 444. Positions 604–694 constitute a BRCT domain; that stretch reads PKGDALAGKT…DRSAPAASNN (91 aa).

Belongs to the NAD-dependent DNA ligase family. LigA subfamily. The cofactor is Mg(2+). It depends on Mn(2+) as a cofactor.

The enzyme catalyses NAD(+) + (deoxyribonucleotide)n-3'-hydroxyl + 5'-phospho-(deoxyribonucleotide)m = (deoxyribonucleotide)n+m + AMP + beta-nicotinamide D-nucleotide.. Functionally, DNA ligase that catalyzes the formation of phosphodiester linkages between 5'-phosphoryl and 3'-hydroxyl groups in double-stranded DNA using NAD as a coenzyme and as the energy source for the reaction. It is essential for DNA replication and repair of damaged DNA. This Roseiflexus castenholzii (strain DSM 13941 / HLO8) protein is DNA ligase.